Reading from the N-terminus, the 296-residue chain is MPHTLLILNGKEAGNQDVRNAVKNLRDEGVTLHVRVTWEQGDAKRYVNEAAALAVETIIAGGGDGTINEVASALIALPESNRPSLGILPLGTANDFATSCSIPLQIDHALQLAVKGRAVAIDLAQVNDKHYFINMATGGFGTRITTETPEKLKAVLGGASYFIHGLMRMDTIKADSCEIRGPGFEWSGDALVIGIGNGRQAGGGQPLCPDALINDGLLQLRLLIAEELLPALLTSVFSGEKNKNVIETTLPWLEITAPHDITFNLDGEPLSGKNFRIEVIPNAIQCRLPPNCELLG.

The DAGKc domain occupies 1-130 (MPHTLLILNG…IDLAQVNDKH (130 aa)). Residues T37, 63 to 69 (GDGTINE), and T92 each bind ATP. Mg(2+)-binding residues include L212, D215, and L217. E268 (proton acceptor) is an active-site residue.

This sequence belongs to the diacylglycerol/lipid kinase family. YegS lipid kinase subfamily. Mg(2+) serves as cofactor. Requires Ca(2+) as cofactor.

Its subcellular location is the cytoplasm. Probably phosphorylates lipids; the in vivo substrate is unknown. This Yersinia enterocolitica serotype O:8 / biotype 1B (strain NCTC 13174 / 8081) protein is Probable lipid kinase YegS-like.